A 667-amino-acid polypeptide reads, in one-letter code: Fatty acyl-CoA synthetase A (667 aa).

It belongs to the ATP-dependent AMP-binding enzyme family.

The protein localises to the endosome membrane. It carries out the reaction a long-chain fatty acid + ATP + CoA = a long-chain fatty acyl-CoA + AMP + diphosphate. In terms of biological role, long chain fatty acid acyl-CoA synthetases catalyze the formation of a thiester bond between a free fatty acid and coenzyme A during fatty acid metabolic process. May mediate fatty acid retrieval from the lumen of endosomes into the cytoplasm. This chain is Fatty acyl-CoA synthetase A (fcsA), found in Dictyostelium discoideum (Social amoeba).